We begin with the raw amino-acid sequence, 63 residues long: Laccase-C1 (63 aa).

It belongs to the multicopper oxidase family. In terms of assembly, monomer. Cu cation serves as cofactor. Post-translationally, glycosylated; contains 16% carbohydrates.

The protein localises to the secreted. The enzyme catalyses 4 hydroquinone + O2 = 4 benzosemiquinone + 2 H2O. Inhibited by sodium azide. In terms of biological role, lignin degradation and detoxification of lignin-derived products. Oxidation of a broad range of substrates including mono-, di- and polyphenols, aromatic amines and methoxy-substituted phenols accompanied by reduction of oxygen to water. This Cerrena unicolor (Canker rot fungus) protein is Laccase-C1.